The primary structure comprises 189 residues: dCTP deaminase (189 aa).

DCTP is bound by residues 112 to 117, 136 to 138, Gln-157, Tyr-171, and Gln-181; these read KSTYAR and TLE. Glu-138 (proton donor/acceptor) is an active-site residue.

This sequence belongs to the dCTP deaminase family. As to quaternary structure, homotrimer.

The enzyme catalyses dCTP + H2O + H(+) = dUTP + NH4(+). Its pathway is pyrimidine metabolism; dUMP biosynthesis; dUMP from dCTP (dUTP route): step 1/2. Its function is as follows. Catalyzes the deamination of dCTP to dUTP. This chain is dCTP deaminase, found in Nitrosospira multiformis (strain ATCC 25196 / NCIMB 11849 / C 71).